The following is a 67-amino-acid chain: Conotoxin Cl6.7 (67 aa).

The signal sequence occupies residues 1-24; sequence MKVTAVLMVAVLVLTACQLTTANT. Residues 25-39 constitute a propeptide that is removed on maturation; it reads TDYVRRIPARKSTMS. Disulfide bonds link Cys-43/Cys-58, Cys-50/Cys-62, and Cys-57/Cys-66.

The protein belongs to the conotoxin O1 superfamily. As to expression, expressed by the venom duct.

The protein localises to the secreted. The polypeptide is Conotoxin Cl6.7 (Californiconus californicus (California cone)).